The primary structure comprises 859 residues: MQEQYNPSEIEALVQKHWHDNKTFEVTEDANKEKFYCLSMFPYPSGRLHMGHVRNYTIGDVVARFQRLQGKNVLQPIGWDSFGLPAENAAINNKTAPAPWTYENIEYMKNQLKLLGFGYDWSREIATCTPEYYRWEQWFFTKLYEKGLVYKKTASVNWCPNDETVLANEQVQDGCCWRCDTPVEQKEIPQWFIKITAYAEELLNDIDTLDGWPEQVKTMQRNWIGRSEGVEMTFGVAGHDKTFDIYTTRPDTLMGVTYVAIAAGHPLAEIAAQTNPELAAFIDECKNSTTSEAELATMEKRGVATGLFAIHPITGKQVPIWAANFVLMNYGTGAVMSVPGHDQRDFEFAKKYGLAIEAVIKPVDGDVDISEAAYTEKGILFNSGEFDGLDFEAGFNAIANKLVAEGKGKRQVNYRLRDWGVSRQRYWGAPIPMVTLADGTVIPTPADQLPVLLPEDVVMDGIQSPIKADKEWAKTQVNGQDALRETDTFDTFMESSWYYARYCSPQADEMLDPAKANYWLPVDQYIGGIEHACMHLLYFRFFHKLLRDAGLVNSNEPAKQLLTQGMVLADAFYYINEKGARVWVSPLDVATTEKDDKGRITKAIDKDGNELVYTGMCKMSKSKNNGIDPQVMVEKYGADTVRLFMMFASPPELTLEWQESGVEGAHRFIKRLWKLASEYIAQDNSEALDVSKLTSEQKALRREVHKTIAKVTDDIGRRQMFNTAVAAVMELMNHLQKAPQTTGQDRAIIGEALSAVMRLLYPIIPHVSFTLWNDLGNTGSIEDSQWPVVDESALVEDSKLIVVQVNGKVRAKITVAADADKDSVEALGMNDEHVIKYLDGLTVRKVIYVPGKLLSIVAN.

Positions 42–52 (PYPSGRLHMGH) match the 'HIGH' region motif. Residues 618 to 622 (KMSKS) carry the 'KMSKS' region motif. Position 621 (Lys-621) interacts with ATP.

This sequence belongs to the class-I aminoacyl-tRNA synthetase family.

Its subcellular location is the cytoplasm. It carries out the reaction tRNA(Leu) + L-leucine + ATP = L-leucyl-tRNA(Leu) + AMP + diphosphate. In Shewanella putrefaciens (strain CN-32 / ATCC BAA-453), this protein is Leucine--tRNA ligase.